The following is a 230-amino-acid chain: Increased recombination centers protein 19 (230 aa).

Belongs to the IRC19 family.

In terms of biological role, involved in sporulation and maintenance of the mitochondrial DNA. Is probably involved in a pathway contributing to genomic integrity. In Saccharomyces cerevisiae (strain JAY291) (Baker's yeast), this protein is Increased recombination centers protein 19 (IRC19).